The chain runs to 102 residues: MNGQNIRIRLKAFDHRILDTSTKEIVSTAKRTGAHVRGPIPLPTKIEKFTVNRSPHVDKKSREQFEIRTHKRVLDIVDPTPQTVDALMKLDLAAGVDVEIKL.

This sequence belongs to the universal ribosomal protein uS10 family. As to quaternary structure, part of the 30S ribosomal subunit.

In terms of biological role, involved in the binding of tRNA to the ribosomes. The chain is Small ribosomal subunit protein uS10 from Methylocella silvestris (strain DSM 15510 / CIP 108128 / LMG 27833 / NCIMB 13906 / BL2).